We begin with the raw amino-acid sequence, 315 residues long: 10-epi-cubebol synthase (315 aa).

4 residues coordinate Mg(2+): aspartate 79, asparagine 220, serine 224, and glutamate 228. The short motif at 79–83 (DDVCE) is the DDXXD motif element. Positions 220-228 (NDIYSLRKE) match the NXXXSXXXE motif motif.

It belongs to the terpene synthase family. Requires Mg(2+) as cofactor.

It catalyses the reaction (2E,6E)-farnesyl diphosphate + H2O = 10-epi-cubebol + diphosphate. In terms of biological role, catalyzes the cyclization of farnesyl diphosphate (FPP) to 10-epi-cubebol. Is also responsible for the formation of many other sesquiterpenes, mainly cadalanes and cubebanes, including 1,10-di-epi-cubebol and the cadalanes delta-cadinene, T-cadinol and alpha-cadinol. The sequence is that of 10-epi-cubebol synthase from Sorangium cellulosum (strain So ce56) (Polyangium cellulosum (strain So ce56)).